We begin with the raw amino-acid sequence, 91 residues long: Small ribosomal subunit protein bS16 (91 aa).

The protein belongs to the bacterial ribosomal protein bS16 family.

The chain is Small ribosomal subunit protein bS16 from Ligilactobacillus salivarius (strain UCC118) (Lactobacillus salivarius).